We begin with the raw amino-acid sequence, 453 residues long: MSPQTETKAGVGFKAGVKEYKLTYYTPEYETKDTDILAAFRVTPQPGVPPEERGAAVAAESSTGTWTTVWTDGLTSLDRYKGRCYHIEPVPGEEEQFIAYVAYPLDLFEEGSVTNMFTSIVGNVFGFKALRALRLEDLRIPVAYVKTFQGPPHGIQVERDKLNKYGRPLLGCTIKPKLGLSAKNYGRAVYECLRGGLDFTKDDENVNSQPFMRWRDRFLFCAEAIYKSQAETGEIKGHYLNATAGTCEDMMKRAVFARELEVPIVMHDYLTGGFTANTTLSHYCRDNGLLLHIHRAMHAVIDRQKNHGMHFRVLAKALRMSGGDHIHSGTVVGKLEGERDITLGFVDLLRDDYIEKDRSRGIYFTQDWVSLPGVLPVASRGIHVWHMPALTEIFGDDSVLQFGGGTLGHPWGNAPGAVANRVALEACVKARNEGRDLAREGGEIIREACKWSP.

A propeptide spanning residues methionine 1 to serine 2 is cleaved from the precursor. Proline 3 bears the N-acetylproline mark. Lysine 14 is subject to N6,N6,N6-trimethyllysine. Positions 123 and 173 each coordinate substrate. The Proton acceptor role is filled by lysine 175. Substrate is bound at residue lysine 177. The Mg(2+) site is built by lysine 201, aspartate 203, and glutamate 204. Lysine 201 is modified (N6-carboxylysine). Catalysis depends on histidine 294, which acts as the Proton acceptor. Substrate-binding residues include arginine 295, histidine 327, and serine 379.

This sequence belongs to the RuBisCO large chain family. Type I subfamily. Heterohexadecamer of 8 large chains and 8 small chains; disulfide-linked. The disulfide link is formed within the large subunit homodimers. It depends on Mg(2+) as a cofactor. The disulfide bond which can form in the large chain dimeric partners within the hexadecamer appears to be associated with oxidative stress and protein turnover.

It is found in the plastid. The protein localises to the chloroplast. It carries out the reaction 2 (2R)-3-phosphoglycerate + 2 H(+) = D-ribulose 1,5-bisphosphate + CO2 + H2O. The catalysed reaction is D-ribulose 1,5-bisphosphate + O2 = 2-phosphoglycolate + (2R)-3-phosphoglycerate + 2 H(+). In terms of biological role, ruBisCO catalyzes two reactions: the carboxylation of D-ribulose 1,5-bisphosphate, the primary event in carbon dioxide fixation, as well as the oxidative fragmentation of the pentose substrate in the photorespiration process. Both reactions occur simultaneously and in competition at the same active site. This is Ribulose bisphosphate carboxylase large chain from Sherardia arvensis (Blue field-madder).